Here is a 140-residue protein sequence, read N- to C-terminus: ATP synthase epsilon chain (140 aa).

It belongs to the ATPase epsilon chain family. F-type ATPases have 2 components, CF(1) - the catalytic core - and CF(0) - the membrane proton channel. CF(1) has five subunits: alpha(3), beta(3), gamma(1), delta(1), epsilon(1). CF(0) has three main subunits: a, b and c.

It is found in the cell membrane. Produces ATP from ADP in the presence of a proton gradient across the membrane. The sequence is that of ATP synthase epsilon chain (atpC) from Enterococcus hirae (strain ATCC 9790 / DSM 20160 / JCM 8729 / LMG 6399 / NBRC 3181 / NCIMB 6459 / NCDO 1258 / NCTC 12367 / WDCM 00089 / R).